The following is a 641-amino-acid chain: MKINKKQIVFFILFSIFLNHVNGIFYLPGMIPHDFAQGEEGAIKVNKITSVHTQIPYKYYQLPGVCQPKEGIIDDTENLGEILLGDRIENSDYTFNFLTDGGKCKVINSESCSPIIKKEDLKVLEDRIQNQYRVHWLLDGLPVRQTGRLASDPGFDLGFMTLAEGQTVATAEKYLNNHLEITIFYHSNPTDNTSRIVGFEIFPTSRQYKKVENWKGDTGDDCPQYGENFEQLSVSVKEGEDQERFVLWTYEVKYTPSPVLWNKRWDIYFESNDNSVHWFSILNSLMIVFILTVMVAMIIIRTLKKDIRRYTSIDTSEDRDSQEETGWKMIHGDVFRPPSHPMLLSVCIGSGVQIFSMTLITMIFAVLGFLSPANIGGLATALIVLFVLSAMFAGYFSTRVFTIFKGRNWKKNTIYTALSMPGIIFGIFFFVNMFLRGAKSSAAVPFGTFASIIAMWFGISVPLVFLGSYFASKKPVPEDPVRTNQIPRQVPDQIWYMNPYLSILMGGILPFGAVFIELHFILTSLWDNQFYYIFGFLFIVLMILIVTSAEISIVMCYFQLCAEDHHWWWRSFLTAGSSSLYMFIYSVSFFRYLGITKFISSLLDFSYSFIMSLAFAALTGTIGFYSCYFLVRKIYSSIHIN.

The N-terminal stretch at 1–23 (MKINKKQIVFFILFSIFLNHVNG) is a signal peptide. Residues 24–279 (IFYLPGMIPH…ESNDNSVHWF (256 aa)) are Extracellular-facing. A helical transmembrane segment spans residues 280 to 300 (SILNSLMIVFILTVMVAMIII). The Cytoplasmic portion of the chain corresponds to 301-349 (RTLKKDIRRYTSIDTSEDRDSQEETGWKMIHGDVFRPPSHPMLLSVCIG). Residues 350–370 (SGVQIFSMTLITMIFAVLGFL) traverse the membrane as a helical segment. Topologically, residues 371-374 (SPAN) are extracellular. A helical transmembrane segment spans residues 375 to 395 (IGGLATALIVLFVLSAMFAGY). Over 396-413 (FSTRVFTIFKGRNWKKNT) the chain is Cytoplasmic. The chain crosses the membrane as a helical span at residues 414–434 (IYTALSMPGIIFGIFFFVNMF). The Extracellular portion of the chain corresponds to 435-445 (LRGAKSSAAVP). A helical membrane pass occupies residues 446 to 466 (FGTFASIIAMWFGISVPLVFL). Residues 467 to 502 (GSYFASKKPVPEDPVRTNQIPRQVPDQIWYMNPYLS) lie on the Cytoplasmic side of the membrane. Residues 503 to 523 (ILMGGILPFGAVFIELHFILT) form a helical membrane-spanning segment. At 524–532 (SLWDNQFYY) the chain is on the extracellular side. Residues 533-553 (IFGFLFIVLMILIVTSAEISI) form a helical membrane-spanning segment. Topologically, residues 554–578 (VMCYFQLCAEDHHWWWRSFLTAGSS) are cytoplasmic. A helical membrane pass occupies residues 579–599 (SLYMFIYSVSFFRYLGITKFI). Topologically, residues 600-608 (SSLLDFSYS) are extracellular. A helical membrane pass occupies residues 609–629 (FIMSLAFAALTGTIGFYSCYF). Topologically, residues 630-641 (LVRKIYSSIHIN) are cytoplasmic.

The protein belongs to the nonaspanin (TM9SF) (TC 9.A.2) family.

It localises to the membrane. In terms of biological role, involved in adhesion, phagocytosis of hydrophilic particles and intracellular killing of bacteria. Associates with proteins harboring glycine-rich transmembrane domains and ensures their efficient localization to the cell surface. In Dictyostelium discoideum (Social amoeba), this protein is Putative phagocytic receptor 1a (phg1a).